Reading from the N-terminus, the 912-residue chain is WD repeat-containing protein 44 (912 aa).

Residues 1–14 (MASESDTEEFFDAP) are compositionally biased toward acidic residues. Positions 1–25 (MASESDTEEFFDAPEDVHLEGGDPI) are disordered. Ala2 is subject to N-acetylalanine. Residues 2 to 170 (ASESDTEEFF…SSTAQLNVPE (169 aa)) are binding activity. Residue Ser3 is modified to Phosphoserine. The short motif at 9 to 15 (EFFDAPE) is the FFAT-like motif element. Residues Ser50, Ser66, Ser71, Ser81, Ser96, and Ser126 each carry the phosphoserine modification. 2 disordered regions span residues 79-104 (DDSL…GTEL) and 118-152 (QEDS…KPVD). The span at 89 to 104 (QSDQATASPVTAGTEL) shows a compositional bias: polar residues. Thr158 carries the post-translational modification Phosphothreonine. 5 disordered regions span residues 183–202 (VKES…TKDF), 207–279 (EVAP…PKEN), 318–349 (QENG…ELTD), 396–422 (SNDA…RLKQ), and 457–479 (RDEV…MPYT). Residues 210 to 256 (PAKPPRQLTPEPDIVASTKKPVPARPPPPANFPPPRPPPPSRPAPPP) are important for interaction with ARHGAP26 AND ARHGAP10. Thr218 is subject to Phosphothreonine. Pro residues predominate over residues 232-255 (PARPPPPANFPPPRPPPPSRPAPP). The residue at position 261 (Ser261) is a Phosphoserine. The span at 261 to 277 (SELEFEALKTPDLDVPK) shows a compositional bias: basic and acidic residues. Thr270 carries the post-translational modification Phosphothreonine. The interval 333–346 (VMGPQRPRSNSGRE) is important for interaction with RAB11A. An interaction with RAB11 region spans residues 334–504 (MGPQRPRSNS…DFDQIKVVQD (171 aa)). Residues Ser341 and Ser343 each carry the phosphoserine modification. A Phosphothreonine modification is found at Thr348. Phosphoserine is present on residues Ser402, Ser469, Ser470, and Ser471. Over residues 466-475 (DDPSSSDDEG) the composition is skewed to acidic residues. Tyr478 is modified (phosphotyrosine). A WD 1 repeat occupies 508 to 547 (EHMGAVWTMKFSHCGRLLASAGQDNVVRIWALKNAFDYFN). The segment at 556–592 (EGRVSPSPSQESLNSSKSDTDTGVCSGTDEDPDDKNA) is disordered. 2 positions are modified to phosphoserine: Ser560 and Ser564. Residues 560–572 (SPSPSQESLNSSK) are compositionally biased toward low complexity. WD repeat units lie at residues 604–642 (GHTA…CLCC), 644–684 (QHID…VALW), 689–728 (GQTK…YHTQ), 739–778 (KVGR…LSMK), 783–822 (VNSS…SKFT), and 871–912 (EDAE…KNLS).

As to quaternary structure, interacts with the GTP-bound form of RAB11A when membrane-associated. Interacts with GRAF1/ARHGAP26 or GRAF2/ARHGAP10; the interaction connects the endoplasmic reticulum (ER) with the endosomal tubule. Interacts (via FFAT-like motif) with VAPA (via MSP domain) or VAPB (via MSP domain); the interaction connects the ER with the endosomal tubule. Does not bind to other Rab and Rho small G proteins. Phosphorylated by ATK1; the phosphorylation stabilizes its interaction with RAB11A and RAB11B. In terms of tissue distribution, highly expressed in brain.

It is found in the cytoplasm. The protein localises to the cytosol. It localises to the perinuclear region. The protein resides in the endosome membrane. Its subcellular location is the golgi apparatus. It is found in the trans-Golgi network. Downstream effector for Rab11 which regulates Rab11 intracellular membrane trafficking functions such as endocytic recycling, intracellular ciliogenesis and protein export. ATK1-mediated phosphorylation of WDR44 induces binding to Rab11 which activates endocytic recycling of transferrin receptor back to the plasma membrane. When bound to Rab11, prevents the formation of the ciliogenic Rab11-Rabin8/RAB3IP-RAB11FIP3 complex, therefore inhibiting preciliary trafficking and ciliogenesis. Participates in neo-synthesized protein export by connecting the endoplasmic reticulum (ER) with the endosomal tubule via direct interactions with the integral ER proteins VAPA or VAPB and the endosomal protein GRAFs (GRAF1/ARHGAP26 or GRAF2/ARHGAP10), which facilitates the transfer of proteins such as E-cadherin, MPP14 and CFTR into a Rab8-Rab10-Rab11-dependent export route. The chain is WD repeat-containing protein 44 (WDR44) from Bos taurus (Bovine).